We begin with the raw amino-acid sequence, 264 residues long: Thymidylate synthase (264 aa).

Arginine 21 contacts dUMP. (6R)-5,10-methylene-5,6,7,8-tetrahydrofolate is bound at residue histidine 51. Residue 126-127 (RR) coordinates dUMP. Cysteine 146 (nucleophile) is an active-site residue. Residues 166 to 169 (RSAD), asparagine 177, and 207 to 209 (HLY) contribute to the dUMP site. Residue aspartate 169 coordinates (6R)-5,10-methylene-5,6,7,8-tetrahydrofolate. A (6R)-5,10-methylene-5,6,7,8-tetrahydrofolate-binding site is contributed by alanine 263.

It belongs to the thymidylate synthase family. Bacterial-type ThyA subfamily. Homodimer.

It localises to the cytoplasm. The catalysed reaction is dUMP + (6R)-5,10-methylene-5,6,7,8-tetrahydrofolate = 7,8-dihydrofolate + dTMP. It participates in pyrimidine metabolism; dTTP biosynthesis. Its function is as follows. Catalyzes the reductive methylation of 2'-deoxyuridine-5'-monophosphate (dUMP) to 2'-deoxythymidine-5'-monophosphate (dTMP) while utilizing 5,10-methylenetetrahydrofolate (mTHF) as the methyl donor and reductant in the reaction, yielding dihydrofolate (DHF) as a by-product. This enzymatic reaction provides an intracellular de novo source of dTMP, an essential precursor for DNA biosynthesis. The sequence is that of Thymidylate synthase from Hyphomonas neptunium (strain ATCC 15444).